Reading from the N-terminus, the 97-residue chain is MEFKHVLMILGVIILTLAPLIMYSGLGEDEGYFGGADGAAGDLIMEISPNYEPWFEPFWEPPSGEIESLLFALQAAIGALIIGYFFGYNKAKYDDQN.

The next 2 helical transmembrane spans lie at 6 to 26 (VLMI…YSGL) and 68 to 88 (SLLF…FFGY).

The protein belongs to the CbiN family. Forms an energy-coupling factor (ECF) transporter complex composed of an ATP-binding protein (A component, CbiO), a transmembrane protein (T component, CbiQ) and 2 possible substrate-capture proteins (S components, CbiM and CbiN) of unknown stoichimetry.

The protein resides in the cell membrane. It functions in the pathway cofactor biosynthesis; adenosylcobalamin biosynthesis. Part of the energy-coupling factor (ECF) transporter complex CbiMNOQ involved in cobalt import. The sequence is that of Cobalt transport protein CbiN from Methanococcus maripaludis (strain C7 / ATCC BAA-1331).